The chain runs to 291 residues: Nucleotide-binding protein lmo2474 (291 aa).

Position 13–20 (13–20 (GMSGAGKT)) interacts with ATP. Residue 63–66 (DLRG) participates in GTP binding.

The protein belongs to the RapZ-like family.

Functionally, displays ATPase and GTPase activities. This is Nucleotide-binding protein lmo2474 from Listeria monocytogenes serovar 1/2a (strain ATCC BAA-679 / EGD-e).